The following is a 523-amino-acid chain: Putative F-box protein At1g30925 (523 aa).

An F-box domain is found at 4–44; it reads FPNDDLVYEILLRLPAKSVARCSCVSKLRRSILSRQDFTEL.

The sequence is that of Putative F-box protein At1g30925 from Arabidopsis thaliana (Mouse-ear cress).